Reading from the N-terminus, the 344-residue chain is Methionine import ATP-binding protein MetN 1 (344 aa).

The ABC transporter domain occupies isoleucine 2 to isoleucine 241. Glycine 38–serine 45 provides a ligand contact to ATP.

Belongs to the ABC transporter superfamily. Methionine importer (TC 3.A.1.24) family. The complex is composed of two ATP-binding proteins (MetN), two transmembrane proteins (MetI) and a solute-binding protein (MetQ).

It localises to the cell inner membrane. The catalysed reaction is L-methionine(out) + ATP + H2O = L-methionine(in) + ADP + phosphate + H(+). It carries out the reaction D-methionine(out) + ATP + H2O = D-methionine(in) + ADP + phosphate + H(+). Functionally, part of the ABC transporter complex MetNIQ involved in methionine import. Responsible for energy coupling to the transport system. The chain is Methionine import ATP-binding protein MetN 1 from Burkholderia mallei (strain ATCC 23344).